The primary structure comprises 670 residues: UvrABC system protein B (670 aa).

The Helicase ATP-binding domain maps to 51–433; it reads DGLKKGEPFQ…SSRVVEQIIR (383 aa). 64–71 serves as a coordination point for ATP; sequence GVTGSGKT. The short motif at 117–140 is the Beta-hairpin element; the sequence is YYDYYQPESYLPAKDQYIEKDAMI. A Helicase C-terminal domain is found at 453–612; it reads DVMQEIRKIV…IVPTTIRKPI (160 aa). Residues 631 to 666 form the UVR domain; it reads PNVIIELDAEMREAADRLDFERAIQVRELIKKLEKE.

Belongs to the UvrB family. Forms a heterotetramer with UvrA during the search for lesions. Interacts with UvrC in an incision complex.

It is found in the cytoplasm. Functionally, the UvrABC repair system catalyzes the recognition and processing of DNA lesions. A damage recognition complex composed of 2 UvrA and 2 UvrB subunits scans DNA for abnormalities. Upon binding of the UvrA(2)B(2) complex to a putative damaged site, the DNA wraps around one UvrB monomer. DNA wrap is dependent on ATP binding by UvrB and probably causes local melting of the DNA helix, facilitating insertion of UvrB beta-hairpin between the DNA strands. Then UvrB probes one DNA strand for the presence of a lesion. If a lesion is found the UvrA subunits dissociate and the UvrB-DNA preincision complex is formed. This complex is subsequently bound by UvrC and the second UvrB is released. If no lesion is found, the DNA wraps around the other UvrB subunit that will check the other stand for damage. This is UvrABC system protein B from Methanosarcina mazei (strain ATCC BAA-159 / DSM 3647 / Goe1 / Go1 / JCM 11833 / OCM 88) (Methanosarcina frisia).